The sequence spans 161 residues: HMG1/2-like protein (161 aa).

Disordered regions lie at residues 1–46, 60–91, and 113–161; these read MKGA…KRAP, FKQK…EKAP, and GESA…DDDE. Composition is skewed to basic and acidic residues over residues 10-27 and 77-89; these read AKAD…EKPA and AGER…ESEK. Positions 42–111 form a DNA-binding region, HMG box; sequence PKRAPSAFFV…EYNKAIAAYN (70 aa). A compositionally biased stretch (low complexity) spans 114-123; sequence ESAAAAAPKK. Positions 145-161 are enriched in acidic residues; sequence NDDDDDEGSDEDEDDDE.

This sequence belongs to the HMGB family.

It is found in the nucleus. This chain is HMG1/2-like protein, found in Triticum aestivum (Wheat).